A 306-amino-acid polypeptide reads, in one-letter code: Probable histidinol-phosphatase (306 aa).

It belongs to the PHP hydrolase family. HisK subfamily.

It catalyses the reaction L-histidinol phosphate + H2O = L-histidinol + phosphate. It participates in amino-acid biosynthesis; L-histidine biosynthesis; L-histidine from 5-phospho-alpha-D-ribose 1-diphosphate: step 8/9. The polypeptide is Probable histidinol-phosphatase (Schizosaccharomyces pombe (strain 972 / ATCC 24843) (Fission yeast)).